Reading from the N-terminus, the 223-residue chain is MPIEDRDDAHVITHALAKHTLSELRSDETDQVAFRNGLVELGRLCGYEIIDGMMDTEYVSITTPLAETTGEVVKGLDDVVIVNVLRAATPFVEGLVEAFPHARQGVISAGRDEAAGMNEDGEFPITVDYVKLPDIDADDTVIVADPILATGSTMVAVLEEVLEQGTPERLVVLSAVSAPPGLARVNDSIPSADVLTVSVDERLDEDGYIVPGVGDAGDRAFGT.

5-phospho-alpha-D-ribose 1-diphosphate contacts are provided by residues Arg86, Arg111, and 145–153; that span reads DPILATGST. Uracil is bound by residues Ile209 and 214-216; that span reads GDA. Asp215 provides a ligand contact to 5-phospho-alpha-D-ribose 1-diphosphate.

It belongs to the UPRTase family. Requires Mg(2+) as cofactor.

The catalysed reaction is UMP + diphosphate = 5-phospho-alpha-D-ribose 1-diphosphate + uracil. It functions in the pathway pyrimidine metabolism; UMP biosynthesis via salvage pathway; UMP from uracil: step 1/1. With respect to regulation, allosterically activated by GTP. Its function is as follows. Catalyzes the conversion of uracil and 5-phospho-alpha-D-ribose 1-diphosphate (PRPP) to UMP and diphosphate. This chain is Uracil phosphoribosyltransferase, found in Natronomonas pharaonis (strain ATCC 35678 / DSM 2160 / CIP 103997 / JCM 8858 / NBRC 14720 / NCIMB 2260 / Gabara) (Halobacterium pharaonis).